Here is a 373-residue protein sequence, read N- to C-terminus: ATP synthase gamma chain 1, chloroplastic (373 aa).

A chloroplast-targeting transit peptide spans 1-50; it reads MACSNLTTMWVSSKPSLSADSSSLSFRSVLKCPTNTSSPPSRASSVSPLQ. Residue Cys139 is part of the active site. An intrachain disulfide couples Cys249 to Cys255. A Phosphoserine modification is found at Ser347.

Belongs to the ATPase gamma chain family. F-type ATPases have 2 components, CF(1) - the catalytic core - and CF(0) - the membrane proton channel. CF(1) has five subunits: alpha(3), beta(3), gamma(1), delta(1), epsilon(1). CF(0) has four main subunits: a, b, b' and c. Interacts with PAB.

The protein localises to the plastid. It localises to the chloroplast thylakoid membrane. Its function is as follows. Produces ATP from ADP in the presence of a proton gradient across the membrane. The gamma chain is believed to be important in regulating ATPase activity and the flow of protons through the CF(0) complex. The chain is ATP synthase gamma chain 1, chloroplastic (ATPC1) from Arabidopsis thaliana (Mouse-ear cress).